The chain runs to 214 residues: Inner membrane-spanning protein YciB (214 aa).

Helical transmembrane passes span 11-31, 50-70, 81-101, 119-139, and 149-169; these read ILFF…VAII, MHII…ILQD, VNWG…KPII, LSYM…YVAY, and FKLF…GVYI.

It belongs to the YciB family.

The protein localises to the cell inner membrane. Its function is as follows. Plays a role in cell envelope biogenesis, maintenance of cell envelope integrity and membrane homeostasis. The polypeptide is Inner membrane-spanning protein YciB (Hydrogenovibrio crunogenus (strain DSM 25203 / XCL-2) (Thiomicrospira crunogena)).